Consider the following 593-residue polypeptide: Numb-related protein 1 (593 aa).

Disordered stretches follow at residues 1–97 (MSAS…WQPD), 235–278 (TAQV…NSRS), 331–375 (LRQG…FGTQ), and 493–581 (MSMS…DPFD). Phosphoserine; by PKC is present on serine 17. Over residues 27 to 37 (QNSLVSEQQPS) the composition is skewed to polar residues. Positions 64 to 74 (RSLRLPKKRRD) are enriched in basic residues. Residue serine 65 is modified to Phosphoserine; by PKC. The PID domain maps to 102–255 (RTGTCCFNVK…STSSTPPKDI (154 aa)). Composition is skewed to polar residues over residues 236–251 (AQVNVQSAQESTSSTP), 261–278 (EDNTSEGTSTQNPSNSRS), and 354–364 (SLRTVSNNPTE). Positions 493 to 511 (MSMSPTSPSSDPPSTSSYS) are enriched in low complexity. Positions 516-528 (SGPPPAHAPPPLP) are enriched in pro residues. The segment covering 532-565 (AVSNGSPSIYQQQLQQANSTRNSPAGINWNSSPN) has biased composition (polar residues).

In terms of assembly, interacts with pkc-3. Expressed in cells comprising the intestine, pharyngeal cells, the anal sphincter and depressor muscles.

It localises to the cytoplasm. The protein localises to the cell cortex. The protein resides in the cytoskeleton. It is found in the membrane. Involved in the tethering and targeting of pkc-3 to modulate the intracellular distribution of the kinase. The complex formed with pkc-3 complexes are likely to be involved in assembly, maintenance, and/or regulation of protein complexes that execute asymmetric and/or polarized cell functions. The chain is Numb-related protein 1 from Caenorhabditis elegans.